Reading from the N-terminus, the 307-residue chain is Ornithine carbamoyltransferase (307 aa).

Residues 56-59, Gln83, Arg107, and 134-137 each bind carbamoyl phosphate; these read STRT and HPCQ. Residues Asn165, Asp223, and 227-228 each bind L-ornithine; that span reads SM. Carbamoyl phosphate-binding positions include 263 to 264 and Arg291; that span reads CL.

Belongs to the aspartate/ornithine carbamoyltransferase superfamily. OTCase family.

It is found in the cytoplasm. It carries out the reaction carbamoyl phosphate + L-ornithine = L-citrulline + phosphate + H(+). Its pathway is amino-acid degradation; L-arginine degradation via ADI pathway; carbamoyl phosphate from L-arginine: step 2/2. Reversibly catalyzes the transfer of the carbamoyl group from carbamoyl phosphate (CP) to the N(epsilon) atom of ornithine (ORN) to produce L-citrulline. The protein is Ornithine carbamoyltransferase of Cupriavidus taiwanensis (strain DSM 17343 / BCRC 17206 / CCUG 44338 / CIP 107171 / LMG 19424 / R1) (Ralstonia taiwanensis (strain LMG 19424)).